We begin with the raw amino-acid sequence, 256 residues long: Eukaryotic translation initiation factor 3 subunit J (256 aa).

A sufficient for interaction with EIF3B region spans residues 1–67 (MAAAAAGDSD…KEEAEVKPEV (67 aa)). The segment at 1 to 106 (MAAAAAGDSD…LEEPEEPKVL (106 aa)) is disordered. A phosphoserine mark is found at Ser9, Ser11, and Ser18. Over residues 38 to 57 (EGEDEDEDVKDNWDDDDDEK) the composition is skewed to acidic residues. The span at 58-104 (KEEAEVKPEVKISEKKKIAEKIKEKERQQKKRQEEIKKRLEEPEEPK) shows a compositional bias: basic and acidic residues. Residues 68 to 133 (KISEKKKIAE…ESDLELAKET (66 aa)) adopt a coiled-coil conformation. Lys104 participates in a covalent cross-link: Glycyl lysine isopeptide (Lys-Gly) (interchain with G-Cter in SUMO2). Thr107 bears the Phosphothreonine mark. A Phosphoserine modification is found at Ser125. A disordered region spans residues 214 to 243 (QSKAKKKKKGVVPGGGLKATMKDDLADYGG). Residues 241-256 (YGGYDGGYAQDYEDFM) form a promotes stable association with the 40S ribosome region. A Phosphotyrosine modification is found at Tyr252.

It belongs to the eIF-3 subunit J family. In terms of assembly, component of the eukaryotic translation initiation factor 3 (eIF-3) complex, which is composed of 13 subunits: EIF3A, EIF3B, EIF3C, EIF3D, EIF3E, EIF3F, EIF3G, EIF3H, EIF3I, EIF3J, EIF3K, EIF3L and EIF3M. The eIF-3 complex appears to include 3 stable modules: module A is composed of EIF3A, EIF3B, EIF3G and EIF3I; module B is composed of EIF3F, EIF3H, and EIF3M; and module C is composed of EIF3C, EIF3D, EIF3E, EIF3K and EIF3L. EIF3C of module C binds EIF3B of module A and EIF3H of module B, thereby linking the three modules. EIF3J is a labile subunit that binds to the eIF-3 complex via EIF3B. The eIF-3 complex interacts with RPS6KB1 under conditions of nutrient depletion. Mitogenic stimulation leads to binding and activation of a complex composed of MTOR and RPTOR, leading to phosphorylation and release of RPS6KB1 and binding of EIF4B to eIF-3. In terms of processing, phosphorylated. Phosphorylation is enhanced upon serum stimulation.

It is found in the cytoplasm. Its function is as follows. Component of the eukaryotic translation initiation factor 3 (eIF-3) complex, which is required for several steps in the initiation of protein synthesis. The eIF-3 complex associates with the 40S ribosome and facilitates the recruitment of eIF-1, eIF-1A, eIF-2:GTP:methionyl-tRNAi and eIF-5 to form the 43S pre-initiation complex (43S PIC). The eIF-3 complex stimulates mRNA recruitment to the 43S PIC and scanning of the mRNA for AUG recognition. The eIF-3 complex is also required for disassembly and recycling of post-termination ribosomal complexes and subsequently prevents premature joining of the 40S and 60S ribosomal subunits prior to initiation. The eIF-3 complex specifically targets and initiates translation of a subset of mRNAs involved in cell proliferation, including cell cycling, differentiation and apoptosis, and uses different modes of RNA stem-loop binding to exert either translational activation or repression. This subunit binds directly within the mRNA entry channel of the 40S ribosome to the aminoacyl (A) site. It may regulate the interaction between the 43S PIC and mRNA. The polypeptide is Eukaryotic translation initiation factor 3 subunit J (Bos taurus (Bovine)).